The following is a 695-amino-acid chain: Follicle-stimulating hormone receptor (695 aa).

Residues 1–17 (MSLLLVSLLAFLTLGSG) form the signal peptide. Cystine bridges form between cysteine 18/cysteine 25 and cysteine 23/cysteine 32. The LRRNT domain occupies 18–46 (CHHRICHCSNGVFLCQESKVTEIPPDLPR). The Extracellular segment spans residues 18–366 (CHHRICHCSN…EDIMGHDILR (349 aa)). LRR repeat units lie at residues 49 to 72 (VELRFVLTKLRVIPKGAFSGFGDL), 73 to 97 (EKIEISQNDVLEVIEANVFSNLPKL), 98 to 118 (HEIRIEKANNLLYIDPDAFQN), 119 to 143 (LPNLRYLLISNTGVKHLPAVHKIQS), 144 to 169 (LQKVLLDIQDNINIHTVERNSFVGLS), 170 to 192 (FESMILWLSKNGIREIHNCAFNG), 193 to 216 (TQLDELNLSDNDNLEELPNDVFQG), 217 to 240 (ASGPVILDISRTRIHSLPSYGLEN), and 241 to 259 (LKKLRAKSTYNLKKLPSLE). 2 N-linked (GlcNAc...) asparagine glycosylation sites follow: asparagine 191 and asparagine 199. Intrachain disulfides connect cysteine 275-cysteine 346, cysteine 276-cysteine 292, cysteine 276-cysteine 356, and cysteine 292-cysteine 338. An N-linked (GlcNAc...) asparagine glycan is attached at asparagine 293. Sulfotyrosine is present on tyrosine 335. Residues 367-387 (VLIWFISILAITGNIIVLVIL) traverse the membrane as a helical segment. The Cytoplasmic portion of the chain corresponds to 388–398 (ITSQYKLTVPR). A helical transmembrane segment spans residues 399–421 (FLMCNLAFADLCIGIYLLLIASV). Over 422 to 443 (DIHTKTQYHNYAIDWQTGAGCD) the chain is Extracellular. Cysteine 442 and cysteine 517 are oxidised to a cystine. A helical membrane pass occupies residues 444–465 (AAGFFTVFASELSVYTLTAITL). The Cytoplasmic segment spans residues 466-485 (ERWHTITHAMQLQCKVQLRH). Residues 486 to 508 (AASIMLVGWIFAFTVALFPIFGI) traverse the membrane as a helical segment. Topologically, residues 509-528 (SSYMKVSICLPMDIDSPLSQ) are extracellular. The helical transmembrane segment at 529-550 (LYVVSLLVLNVLAFVVICGCYT) threads the bilayer. Residues 551 to 573 (HIYLTVRNPNIMSSSSDTKIAKR) lie on the Cytoplasmic side of the membrane. Residues 574–597 (MAMLIFTDFLCMAPISFFAISASL) traverse the membrane as a helical segment. Residues 598 to 608 (KVPLITVSKSK) are Extracellular-facing. A helical membrane pass occupies residues 609-630 (ILLVLFYPINSCANPFLYAIFT). The Cytoplasmic segment spans residues 631–695 (KNFRRDVFIL…LIPLSRLAQN (65 aa)).

It belongs to the G-protein coupled receptor 1 family. FSH/LSH/TSH subfamily. Homotrimer. Functions as a homotrimer binding the FSH hormone heterodimer composed of CGA and FSHB. Interacts with ARRB2. Interacts with APPL2; interaction is independent of follicle stimulating hormone stimulation. Post-translationally, N-glycosylated; indirectly required for FSH-binding, possibly via a conformational change that allows high affinity binding of hormone. In terms of processing, sulfated.

The protein localises to the cell membrane. In terms of biological role, g protein-coupled receptor for follitropin, the follicle-stimulating hormone. Through cAMP production activates the downstream PI3K-AKT and ERK1/ERK2 signaling pathways. This Sus scrofa (Pig) protein is Follicle-stimulating hormone receptor (FSHR).